Consider the following 861-residue polypeptide: DNA mismatch repair protein MutS (861 aa).

616–623 contacts ATP; sequence GPNMGGKS.

The protein belongs to the DNA mismatch repair MutS family.

Its function is as follows. This protein is involved in the repair of mismatches in DNA. It is possible that it carries out the mismatch recognition step. This protein has a weak ATPase activity. This Haemophilus influenzae (strain 86-028NP) protein is DNA mismatch repair protein MutS.